Reading from the N-terminus, the 107-residue chain is EIVLTQSPAITAASLGQKVTITCSASSSVSYMHWYQQKSGTSPKPWIYEISKLASGVPARFSGSGSGTSYSLTISSMEAEDAAIYYCQQWNYPLITFGGGTKLEIKR.

Residues 1–23 are framework-1; sequence EIVLTQSPAITAASLGQKVTITC. Cysteines 23 and 87 form a disulfide. The complementarity-determining-1 stretch occupies residues 24 to 33; sequence SASSSVSYMH. Positions 34–48 are framework-2; sequence WYQQKSGTSPKPWIY. The segment at 49–55 is complementarity-determining-2; that stretch reads EISKLAS. The tract at residues 56-87 is framework-3; it reads GVPARFSGSGSGTSYSLTISSMEAEDAAIYYC. A complementarity-determining-3 region spans residues 88–96; sequence QQWNYPLIT. A framework-4 region spans residues 97-106; sequence FGGGTKLEIK.

This Mus musculus (Mouse) protein is Ig kappa chain V-VI region SAPC 10.